A 931-amino-acid polypeptide reads, in one-letter code: Translation initiation factor IF-2 (931 aa).

The interval 32–310 (KSASSTVEPP…SSKARKNRLA (279 aa)) is disordered. A compositionally biased stretch (polar residues) spans 50 to 59 (FASSGQGNAS). Residues 82-96 (PAAPSAPKPAAPAAP) are compositionally biased toward pro residues. Positions 156 to 168 (GNAPQGGNNANGA) are enriched in low complexity. 3 stretches are compositionally biased toward gly residues: residues 217–238 (RPGQ…GGAK), 248–271 (GQGG…GFQG), and 281–298 (ARGG…GRQG). A tr-type G domain is found at 424–596 (PRPPVVTVMG…VLLTADAELD (173 aa)). The tract at residues 433–440 (GHVDHGKT) is G1. 433-440 (GHVDHGKT) contacts GTP. Residues 458–462 (GITQR) are G2. Residues 483-486 (DTPG) form a G3 region. Residues 483–487 (DTPGH) and 537–540 (NKID) each bind GTP. Residues 537–540 (NKID) form a G4 region. Positions 573–575 (SAK) are G5.

It belongs to the TRAFAC class translation factor GTPase superfamily. Classic translation factor GTPase family. IF-2 subfamily.

It is found in the cytoplasm. Its function is as follows. One of the essential components for the initiation of protein synthesis. Protects formylmethionyl-tRNA from spontaneous hydrolysis and promotes its binding to the 30S ribosomal subunits. Also involved in the hydrolysis of GTP during the formation of the 70S ribosomal complex. This chain is Translation initiation factor IF-2, found in Bifidobacterium adolescentis (strain ATCC 15703 / DSM 20083 / NCTC 11814 / E194a).